Here is an 82-residue protein sequence, read N- to C-terminus: T-complex protein 1 subunit gamma (82 aa).

Gly15 contributes to the ADP binding site. Gly15 lines the ATP pocket. Asp66 provides a ligand contact to Mg(2+). ADP contacts are provided by Gly67, Thr68, Thr69, and Ser70. Positions 67, 68, and 69 each coordinate ATP.

It belongs to the TCP-1 chaperonin family. Component of the chaperonin-containing T-complex (TRiC), a hexadecamer composed of two identical back-to-back stacked rings enclosing a protein folding chamber. Each ring is made up of eight different subunits: TCP1/CCT1, CCT2, CCT3, CCT4, CCT5, CCT6A/CCT6, CCT7, CCT8. Interacts with PACRG. Interacts with DNAAF4. Interacts with DLEC1.

Its subcellular location is the cytoplasm. The catalysed reaction is ATP + H2O = ADP + phosphate + H(+). Its function is as follows. Component of the chaperonin-containing T-complex (TRiC), a molecular chaperone complex that assists the folding of actin, tubulin and other proteins upon ATP hydrolysis. The TRiC complex mediates the folding of WRAP53/TCAB1, thereby regulating telomere maintenance. As part of the TRiC complex may play a role in the assembly of BBSome, a complex involved in ciliogenesis regulating transports vesicles to the cilia. The chain is T-complex protein 1 subunit gamma (CCT3) from Sus scrofa (Pig).